A 415-amino-acid chain; its full sequence is ER-derived vesicles protein ERV46 (415 aa).

The Cytoplasmic portion of the chain corresponds to 1–24 (MKRSTLLSLDAFAKTEEDVRVRTR). A helical transmembrane segment spans residues 25–45 (AGGLITLSCILTTLFLLVNEW). The Lumenal portion of the chain corresponds to 46 to 376 (GQFNSVVTRP…VINKEQHGQT (331 aa)). The chain crosses the membrane as a helical span at residues 377 to 397 (WSGFILNCITSIGGVLAVGTV). Residues 398 to 415 (MDKLFYKAQRSIWGKKSQ) are Cytoplasmic-facing. A Phenylalanine-tyrosine motif motif is present at residues 402–403 (FY).

This sequence belongs to the ERGIC family. Interacts with ERV41.

The protein resides in the endoplasmic reticulum membrane. It localises to the golgi apparatus membrane. Functionally, constituent of COPII-coated endoplasmic reticulum-derived transport vesicles. Required for efficient transport of a subset of secretory proteins to the Golgi. The C-terminal Phe-Tyr motif is required for exit from the endoplasmic reticulum. Facilitates retrograde transport from the Golgi to the endoplasmic reticulum. The sequence is that of ER-derived vesicles protein ERV46 (ERV46) from Saccharomyces cerevisiae (strain ATCC 204508 / S288c) (Baker's yeast).